The primary structure comprises 62 residues: 6.7 kDa chloroplast outer envelope membrane protein (62 aa).

Over Met-1–Gln-17 the chain is Chloroplast intermembrane. A helical transmembrane segment spans residues Ala-18–Phe-40. The Cytoplasmic segment spans residues Asn-41–Thr-62.

The protein resides in the plastid. It is found in the chloroplast outer membrane. The chain is 6.7 kDa chloroplast outer envelope membrane protein from Spinacia oleracea (Spinach).